The primary structure comprises 253 residues: Phosphoribosylaminoimidazole-succinocarboxamide synthase (253 aa).

Belongs to the SAICAR synthetase family.

It catalyses the reaction 5-amino-1-(5-phospho-D-ribosyl)imidazole-4-carboxylate + L-aspartate + ATP = (2S)-2-[5-amino-1-(5-phospho-beta-D-ribosyl)imidazole-4-carboxamido]succinate + ADP + phosphate + 2 H(+). It participates in purine metabolism; IMP biosynthesis via de novo pathway; 5-amino-1-(5-phospho-D-ribosyl)imidazole-4-carboxamide from 5-amino-1-(5-phospho-D-ribosyl)imidazole-4-carboxylate: step 1/2. The sequence is that of Phosphoribosylaminoimidazole-succinocarboxamide synthase from Dinoroseobacter shibae (strain DSM 16493 / NCIMB 14021 / DFL 12).